Reading from the N-terminus, the 157-residue chain is MRVGIGYDVHKLVAERQLVLGGVVIPYEFGLLGHSDADVLIHAIMDALLGAAALGDIGRHFPDNEPRYKGISSMKLLEEVREKLAVKGYSVNNLDAVVVAQAPKLAPYIQAMQQNIARTLQVDLDSVNIKATTTEHLGFAGRGEGIGAYAVCTLQQG.

Asp8 and His10 together coordinate a divalent metal cation. 4-CDP-2-C-methyl-D-erythritol 2-phosphate contacts are provided by residues Asp8–His10 and His34–Ser35. His42 is an a divalent metal cation binding site. Residues Asp56 to Gly58, Phe61 to Glu65, Thr132 to Glu135, Phe139, and Arg142 contribute to the 4-CDP-2-C-methyl-D-erythritol 2-phosphate site.

It belongs to the IspF family. As to quaternary structure, homotrimer. A divalent metal cation is required as a cofactor.

It carries out the reaction 4-CDP-2-C-methyl-D-erythritol 2-phosphate = 2-C-methyl-D-erythritol 2,4-cyclic diphosphate + CMP. The protein operates within isoprenoid biosynthesis; isopentenyl diphosphate biosynthesis via DXP pathway; isopentenyl diphosphate from 1-deoxy-D-xylulose 5-phosphate: step 4/6. In terms of biological role, involved in the biosynthesis of isopentenyl diphosphate (IPP) and dimethylallyl diphosphate (DMAPP), two major building blocks of isoprenoid compounds. Catalyzes the conversion of 4-diphosphocytidyl-2-C-methyl-D-erythritol 2-phosphate (CDP-ME2P) to 2-C-methyl-D-erythritol 2,4-cyclodiphosphate (ME-CPP) with a corresponding release of cytidine 5-monophosphate (CMP). In Desulforamulus reducens (strain ATCC BAA-1160 / DSM 100696 / MI-1) (Desulfotomaculum reducens), this protein is 2-C-methyl-D-erythritol 2,4-cyclodiphosphate synthase.